A 442-amino-acid polypeptide reads, in one-letter code: Transcription factor MYCFIDRAFT_198930 (442 aa).

Residues 1–34 (MSTTPMAAPPGADLKPVTSSRGRSSTSDEQKLRS) form a disordered region. The segment at residues 36–63 (CESCAQSKLKCSGDKPACARCAKRGLAC) is a DNA-binding region (zn(2)-C6 fungal-type). The disordered stretch occupies residues 74 to 107 (KPKGYTSTNDNNPSKRREDSHSPAASQWSSTGHL). Over residues 96-107 (PAASQWSSTGHL) the composition is skewed to polar residues.

The protein localises to the nucleus. In terms of biological role, transcription factor that positively regulates the expression of the gene cluster that mediates the biosynthesis of an emodin derivative that may be involved in black Sigatoka disease of banana. The polypeptide is Transcription factor MYCFIDRAFT_198930 (Pseudocercospora fijiensis (strain CIRAD86) (Black leaf streak disease fungus)).